Consider the following 298-residue polypeptide: Keratin-associated protein 10-11 (298 aa).

A run of 25 repeats spans residues 26 to 30 (CCEPP), 36 to 40 (CCAPA), 57 to 61 (CCQAA), 79 to 83 (CCQQS), 89 to 93 (CCTSS), 99 to 103 (CCVPV), 104 to 108 (CCKTV), 109 to 113 (CCKPV), 114 to 118 (CCVPV), 119 to 123 (CCGAA), 126 to 130 (CCRQS), 136 to 140 (CCASS), 146 to 150 (CCVPV), 151 to 155 (CCKPV), 156 to 160 (CCVST), 168 to 172 (CCQQS), 178 to 182 (CCTSS), 188 to 192 (CCVPV), 193 to 197 (CCKTV), 203 to 207 (CCVPV), 225 to 229 (CCTTS), 230 to 234 (CCRPS), 249 to 253 (CCVPV), 256 to 260 (CCAPT), and 267 to 271 (CCRPA). A 25 X 5 AA repeats of C-C-X(3) region spans residues 26–271 (CCEPPCSAPS…SCQSSCCRPA (246 aa)).

The protein belongs to the KRTAP type 10 family. In terms of assembly, interacts with hair keratins. As to expression, restricted to a narrow region of the hair fiber cuticle, lying approximately 20 cell layers above the apex of the dermal papilla of the hair root; not detected in any other tissues.

Functionally, in the hair cortex, hair keratin intermediate filaments are embedded in an interfilamentous matrix, consisting of hair keratin-associated proteins (KRTAP), which are essential for the formation of a rigid and resistant hair shaft through their extensive disulfide bond cross-linking with abundant cysteine residues of hair keratins. The matrix proteins include the high-sulfur and high-glycine-tyrosine keratins. The sequence is that of Keratin-associated protein 10-11 (KRTAP10-11) from Homo sapiens (Human).